The primary structure comprises 142 residues: Large ribosomal subunit protein uL11 (142 aa).

Belongs to the universal ribosomal protein uL11 family. Part of the ribosomal stalk of the 50S ribosomal subunit. Interacts with L10 and the large rRNA to form the base of the stalk. L10 forms an elongated spine to which L12 dimers bind in a sequential fashion forming a multimeric L10(L12)X complex. Post-translationally, one or more lysine residues are methylated.

Forms part of the ribosomal stalk which helps the ribosome interact with GTP-bound translation factors. This is Large ribosomal subunit protein uL11 from Pseudoalteromonas atlantica (strain T6c / ATCC BAA-1087).